A 467-amino-acid polypeptide reads, in one-letter code: Uronate isomerase (467 aa).

Belongs to the metallo-dependent hydrolases superfamily. Uronate isomerase family.

The enzyme catalyses D-glucuronate = D-fructuronate. The catalysed reaction is aldehydo-D-galacturonate = keto-D-tagaturonate. It functions in the pathway carbohydrate metabolism; pentose and glucuronate interconversion. In Flavobacterium johnsoniae (strain ATCC 17061 / DSM 2064 / JCM 8514 / BCRC 14874 / CCUG 350202 / NBRC 14942 / NCIMB 11054 / UW101) (Cytophaga johnsonae), this protein is Uronate isomerase.